Here is a 244-residue protein sequence, read N- to C-terminus: Ureidoacrylate amidohydrolase RutB (244 aa).

Aspartate 38 serves as the catalytic Proton acceptor. The active site involves lysine 147. Cysteine 180 serves as the catalytic Nucleophile.

This sequence belongs to the isochorismatase family. RutB subfamily.

It carries out the reaction (Z)-3-ureidoacrylate + H2O + H(+) = (Z)-3-aminoacrylate + NH4(+) + CO2. The catalysed reaction is (Z)-3-ureidoacrylate + H2O = (Z)-3-aminoacrylate + carbamate + H(+). The enzyme catalyses (Z)-2-methylureidoacrylate + H2O + H(+) = (Z)-2-methylaminoacrylate + NH4(+) + CO2. Its function is as follows. Hydrolyzes ureidoacrylate to form aminoacrylate and carbamate. The carbamate hydrolyzes spontaneously, thereby releasing one of the nitrogen atoms of the pyrimidine ring as ammonia and one of its carbon atoms as CO2. In Shigella flexneri serotype X (strain 2002017), this protein is Ureidoacrylate amidohydrolase RutB.